Reading from the N-terminus, the 376-residue chain is Lipid-A-disaccharide synthase (376 aa).

This sequence belongs to the LpxB family.

It catalyses the reaction a lipid X + a UDP-2-N,3-O-bis[(3R)-3-hydroxyacyl]-alpha-D-glucosamine = a lipid A disaccharide + UDP + H(+). It participates in bacterial outer membrane biogenesis; LPS lipid A biosynthesis. Functionally, condensation of UDP-2,3-diacylglucosamine and 2,3-diacylglucosamine-1-phosphate to form lipid A disaccharide, a precursor of lipid A, a phosphorylated glycolipid that anchors the lipopolysaccharide to the outer membrane of the cell. The chain is Lipid-A-disaccharide synthase from Hydrogenovibrio crunogenus (strain DSM 25203 / XCL-2) (Thiomicrospira crunogena).